The following is a 103-amino-acid chain: Secreted LysM effector Mgx1LysM (103 aa).

The first 18 residues, 1 to 18, serve as a signal peptide directing secretion; it reads MKVTTIIAALLSVAVVDA. Cystine bridges form between Cys-31/Cys-89 and Cys-62/Cys-97. The LysM domain maps to 37–85; the sequence is IPYVVKKGDTLTHIAHDIYKRKVGICDLAYTNHIGYNPDLIYEDQTLLI. Chitin-binding residues include Gly-44, Thr-48, Asp-75, and Ile-77.

Belongs to the secreted LysM effector family. Forms homodimers in a chitin-independent manner through interactions at the N-termini of Mgx1LysM monomers. Homodimers are further polymerized in a chitin-dependent manner.

The protein resides in the secreted. Its subcellular location is the cell wall. Secreted effector that enables the plant pathogenic fungus to manipulate host defenses for successful infection. Binds chitin and suppresses the chitin-induced reactive oxygen species (ROS) burst. Chitin-induced polymerization of homodimers forms a contiguous Mg1LysM highly oligomeric super-complexe that is anchored to the chitin in the fungal cell wall to prevent hydrolysis by host chitinases. The sequence is that of Secreted LysM effector Mgx1LysM from Zymoseptoria tritici (strain CBS 115943 / IPO323) (Speckled leaf blotch fungus).